A 172-amino-acid polypeptide reads, in one-letter code: MDLKEKIRIIDGFPKEGISFKDITTLIGDGEGLKASIDMFVEYLKDKNVDLIVGPEARGFIFGVPVAYALGAGFVPVRKPGKLPGETISVNYDLEYGSDSLQIHKDSIKKGQRVAIVDDLLATGGTVEGVAKLVEEAGGEVVSLAFLIELIDLKGRDKLGDYDVISLTQYDI.

It belongs to the purine/pyrimidine phosphoribosyltransferase family. As to quaternary structure, homodimer.

Its subcellular location is the cytoplasm. The catalysed reaction is AMP + diphosphate = 5-phospho-alpha-D-ribose 1-diphosphate + adenine. Its pathway is purine metabolism; AMP biosynthesis via salvage pathway; AMP from adenine: step 1/1. In terms of biological role, catalyzes a salvage reaction resulting in the formation of AMP, that is energically less costly than de novo synthesis. The chain is Adenine phosphoribosyltransferase from Clostridium botulinum (strain Eklund 17B / Type B).